The chain runs to 382 residues: Anhydro-N-acetylmuramic acid kinase (382 aa).

Residue 22 to 29 coordinates ATP; sequence GTSMDGVD.

This sequence belongs to the anhydro-N-acetylmuramic acid kinase family.

The catalysed reaction is 1,6-anhydro-N-acetyl-beta-muramate + ATP + H2O = N-acetyl-D-muramate 6-phosphate + ADP + H(+). Its pathway is amino-sugar metabolism; 1,6-anhydro-N-acetylmuramate degradation. It participates in cell wall biogenesis; peptidoglycan recycling. In terms of biological role, catalyzes the specific phosphorylation of 1,6-anhydro-N-acetylmuramic acid (anhMurNAc) with the simultaneous cleavage of the 1,6-anhydro ring, generating MurNAc-6-P. Is required for the utilization of anhMurNAc either imported from the medium or derived from its own cell wall murein, and thus plays a role in cell wall recycling. This Burkholderia lata (strain ATCC 17760 / DSM 23089 / LMG 22485 / NCIMB 9086 / R18194 / 383) protein is Anhydro-N-acetylmuramic acid kinase.